A 257-amino-acid polypeptide reads, in one-letter code: uncharacterized protein (257 aa).

2 disordered regions span residues 1–164 and 225–257; these read MERS…AGAC and TAWS…RARA. Residues 10 to 28 show a composition bias toward basic and acidic residues; that stretch reads CGEEPRSGSRRLPKAEGDK. The segment covering 54–65 has biased composition (basic residues); sequence RPNRASGRRRRS. Over residues 125–139 the composition is skewed to pro residues; that stretch reads RPTPRPCAGPAPPPA. Basic residues predominate over residues 144–162; the sequence is RCRRPRRWPRAGRRGRRAG.

This is an uncharacterized protein from Homo sapiens (Human).